The primary structure comprises 500 residues: Aldehyde dehydrogenase, mitochondrial (500 aa).

Lys-35, Lys-56, and Lys-142 each carry N6-acetyllysine. 245–250 (GSTEVG) contacts NAD(+). The active-site Proton acceptor is Glu-268. The active-site Nucleophile is Cys-302. An N6-acetyllysine mark is found at Lys-358, Lys-366, Lys-409, Lys-411, Lys-424, and Lys-434.

It belongs to the aldehyde dehydrogenase family. As to quaternary structure, homotetramer. In response to mitochondrial stress, the precursor protein is ubiquitinated by the SIFI complex in the cytoplasm before mitochondrial import, leading to its degradation. Within the SIFI complex, UBR4 initiates ubiquitin chain that are further elongated or branched by KCMF1.

It is found in the mitochondrion matrix. It carries out the reaction an aldehyde + NAD(+) + H2O = a carboxylate + NADH + 2 H(+). The protein operates within alcohol metabolism; ethanol degradation; acetate from ethanol: step 2/2. Its function is as follows. Required for clearance of cellular formaldehyde, a cytotoxic and carcinogenic metabolite that induces DNA damage. This chain is Aldehyde dehydrogenase, mitochondrial (ALDH2), found in Equus caballus (Horse).